The following is an 866-amino-acid chain: Scm-like with four MBT domains protein 1 (866 aa).

MBT repeat units lie at residues L20 to P120, S128 to P232, A242 to P348, and F356 to P453. The segment at V34–V42 is antigenic epitope. The disordered stretch occupies residues K641–K777. A compositionally biased stretch (basic residues) spans K663 to S682. Residues S683–P694 are compositionally biased toward polar residues. Composition is skewed to acidic residues over residues G699 to L713 and Q721 to E730. The segment covering C737–S749 has biased composition (low complexity). A phosphoserine mark is found at S767 and S775. The SAM domain occupies W796 to F864.

In terms of assembly, interacts with MYOD1. Component of the SLC (SFMBT1-LSD1-CoREST) corepressor complex, which also contains KDM1A/LSD1 and RCOR1/CoREST. Interacts with KDM1A/LSD1 and RCOR1/CoREST. Interacts with L3MBTL3. Expressed in all cell lines and normal tissues tested, including the thymus.

It is found in the nucleus. Histone-binding protein, which is part of various corepressor complexes. Mediates the recruitment of corepressor complexes to target genes, followed by chromatin compaction and repression of transcription. Plays a role during myogenesis: required for the maintenance of undifferentiated states of myogenic progenitor cells via interaction with MYOD1. Interaction with MYOD1 leads to the recruitment of associated corepressors and silencing of MYOD1 target genes. Part of the SLC complex in germ cells, where it may play a role during spermatogenesis. The protein is Scm-like with four MBT domains protein 1 (SFMBT1) of Homo sapiens (Human).